The chain runs to 915 residues: Probable dipeptidyl-aminopeptidase B (915 aa).

The disordered stretch occupies residues 1-82 (MAPPFTDDPE…GAFLGPPGVP (82 aa)). At 1 to 94 (MAPPFTDDPE…RQPMDRGFRR (94 aa)) the chain is on the cytoplasmic side. A compositionally biased stretch (low complexity) spans 15 to 32 (STSRLSQDSLSSVSTTSL). Over residues 36-62 (RIQEEMDRDPSASRSARRDLLPATKDE) the composition is skewed to basic and acidic residues. A helical; Signal-anchor for type II membrane protein membrane pass occupies residues 95–115 (ILIIIGAVFVGAWLAGLGIFV). At 116 to 915 (LSGSYKHESD…IDTKKRRHVS (800 aa)) the chain is on the vacuolar side. N-linked (GlcNAc...) asparagine glycosylation is found at Asn-355 and Asn-577. Ser-760 (charge relay system) is an active-site residue. An N-linked (GlcNAc...) asparagine glycan is attached at Asn-819. Catalysis depends on charge relay system residues Asp-837 and His-870.

The protein belongs to the peptidase S9B family.

Its subcellular location is the vacuole membrane. It carries out the reaction Release of an N-terminal dipeptide, Xaa-Yaa-|-Zaa-, from a polypeptide, preferentially when Yaa is Pro, provided Zaa is neither Pro nor hydroxyproline.. Type IV dipeptidyl-peptidase which removes N-terminal dipeptides sequentially from polypeptides having unsubstituted N-termini provided that the penultimate residue is proline. The protein is Probable dipeptidyl-aminopeptidase B (DAPB) of Metarhizium robertsii (strain ARSEF 23 / ATCC MYA-3075) (Metarhizium anisopliae (strain ARSEF 23)).